A 219-amino-acid polypeptide reads, in one-letter code: Peptide methionine sulfoxide reductase MsrA (219 aa).

The active site involves C58.

Belongs to the MsrA Met sulfoxide reductase family.

The catalysed reaction is L-methionyl-[protein] + [thioredoxin]-disulfide + H2O = L-methionyl-(S)-S-oxide-[protein] + [thioredoxin]-dithiol. It carries out the reaction [thioredoxin]-disulfide + L-methionine + H2O = L-methionine (S)-S-oxide + [thioredoxin]-dithiol. Its function is as follows. Has an important function as a repair enzyme for proteins that have been inactivated by oxidation. Catalyzes the reversible oxidation-reduction of methionine sulfoxide in proteins to methionine. This is Peptide methionine sulfoxide reductase MsrA from Ectopseudomonas mendocina (strain ymp) (Pseudomonas mendocina).